A 925-amino-acid chain; its full sequence is Centrosomal protein of 104 kDa (925 aa).

Positions 209 to 289 (EVAQIIRKLD…RAEVYEQLEL (81 aa)) form a coiled coil. 2 HEAT repeats span residues 529-567 (TIPVLLTRTGDSSARLRVTAANFIQEMALFKEVKSLQII) and 604-640 (GFTIDNVMKFSVSALEHRVYEVRETAVRIILDMYRQH). Residues 677–725 (DAEMRARRKAATEEAEKQKKEEIKALQGQLAALKEIQAEVQEKESDAVK) adopt a coiled-coil conformation. The segment at 883–925 (PALQPGKSSAVAASGPLGSKAGSKIPTPKGGLSKSSSRTYAKR) is disordered. The segment covering 915-925 (SKSSSRTYAKR) has biased composition (polar residues).

In terms of assembly, interacts with CCP110 and CEP97. Interacts with ARMC9, TOGARAM1, CCDC66 and CSPP1.

The protein resides in the cell projection. Its subcellular location is the cilium. The protein localises to the cytoplasm. It localises to the cytoskeleton. It is found in the microtubule organizing center. The protein resides in the centrosome. Its subcellular location is the centriole. The protein localises to the spindle pole. Required for ciliogenesis and for structural integrity at the ciliary tip. This is Centrosomal protein of 104 kDa (CEP104) from Homo sapiens (Human).